The following is a 225-amino-acid chain: Enolase-phosphatase E1 (225 aa).

It belongs to the HAD-like hydrolase superfamily. MasA/MtnC family. In terms of assembly, monomer. Requires Mg(2+) as cofactor.

The catalysed reaction is 5-methylsulfanyl-2,3-dioxopentyl phosphate + H2O = 1,2-dihydroxy-5-(methylsulfanyl)pent-1-en-3-one + phosphate. It functions in the pathway amino-acid biosynthesis; L-methionine biosynthesis via salvage pathway; L-methionine from S-methyl-5-thio-alpha-D-ribose 1-phosphate: step 3/6. Its pathway is amino-acid biosynthesis; L-methionine biosynthesis via salvage pathway; L-methionine from S-methyl-5-thio-alpha-D-ribose 1-phosphate: step 4/6. Functionally, bifunctional enzyme that catalyzes the enolization of 2,3-diketo-5-methylthiopentyl-1-phosphate (DK-MTP-1-P) into the intermediate 2-hydroxy-3-keto-5-methylthiopentenyl-1-phosphate (HK-MTPenyl-1-P), which is then dephosphorylated to form the acireductone 1,2-dihydroxy-3-keto-5-methylthiopentene (DHK-MTPene). In Pseudomonas aeruginosa (strain UCBPP-PA14), this protein is Enolase-phosphatase E1.